The primary structure comprises 140 residues: Phosphopantetheine adenylyltransferase (140 aa).

Position 9 (Ser9) interacts with substrate. ATP contacts are provided by residues 9–10 and His17; that span reads SF. 3 residues coordinate substrate: Lys41, Thr74, and Arg88. Residues 89–91, Glu99, and 124–130 each bind ATP; these read GLR and KRSLSST.

It belongs to the bacterial CoaD family. In terms of assembly, homohexamer. Mg(2+) serves as cofactor.

It is found in the cytoplasm. The catalysed reaction is (R)-4'-phosphopantetheine + ATP + H(+) = 3'-dephospho-CoA + diphosphate. Its pathway is cofactor biosynthesis; coenzyme A biosynthesis; CoA from (R)-pantothenate: step 4/5. Functionally, reversibly transfers an adenylyl group from ATP to 4'-phosphopantetheine, yielding dephospho-CoA (dPCoA) and pyrophosphate. The polypeptide is Phosphopantetheine adenylyltransferase (Mycoplasma capricolum subsp. capricolum (strain California kid / ATCC 27343 / NCTC 10154)).